The following is a 363-amino-acid chain: tRNA(Met) cytidine acetate ligase (363 aa).

Residues 7–20 (IAEFNPFHNGHKYL), G96, N152, and R175 contribute to the ATP site.

The protein belongs to the TmcAL family.

It is found in the cytoplasm. The enzyme catalyses cytidine(34) in elongator tRNA(Met) + acetate + ATP = N(4)-acetylcytidine(34) in elongator tRNA(Met) + AMP + diphosphate. Functionally, catalyzes the formation of N(4)-acetylcytidine (ac(4)C) at the wobble position of elongator tRNA(Met), using acetate and ATP as substrates. First activates an acetate ion to form acetyladenylate (Ac-AMP) and then transfers the acetyl group to tRNA to form ac(4)C34. The polypeptide is tRNA(Met) cytidine acetate ligase (Streptococcus thermophilus (strain ATCC BAA-491 / LMD-9)).